A 210-amino-acid chain; its full sequence is Outer-membrane lipoprotein LolB (210 aa).

An N-terminal signal peptide occupies residues 1–29 (MSLISNNEERSLRVRYCIAIALSALLISG). Residue cysteine 30 is the site of N-palmitoyl cysteine attachment. Residue cysteine 30 is the site of S-diacylglycerol cysteine attachment.

This sequence belongs to the LolB family. Monomer.

It localises to the cell outer membrane. Its function is as follows. Plays a critical role in the incorporation of lipoproteins in the outer membrane after they are released by the LolA protein. This chain is Outer-membrane lipoprotein LolB, found in Coxiella burnetii (strain CbuG_Q212) (Coxiella burnetii (strain Q212)).